A 1517-amino-acid polypeptide reads, in one-letter code: Neurite extension and migration factor (1517 aa).

Positions Asp381 to Glu405 are enriched in basic and acidic residues. 7 disordered regions span residues Asp381–Gly416, Val505–Arg529, Ser644–Gly697, Lys732–Glu775, Arg1065–Ser1084, Asp1161–Lys1228, and Ala1372–Asp1422. A compositionally biased stretch (polar residues) spans Ser644–Ala663. The span at Ser678–Ala687 shows a compositional bias: low complexity. Residues Thr764 to Met773 show a composition bias toward polar residues.

It is found in the nucleus. The protein localises to the cytoplasm. Involved in neurite outgrowth by regulating cell-cell adhesion via the N-cadherin signaling pathway. May act by regulating expression of protein-coding genes, such as N-cadherins and integrin beta-1 (ITGB1). This is Neurite extension and migration factor from Rattus norvegicus (Rat).